The primary structure comprises 31 residues: U2-theraphotoxin-Hhn1a (31 aa).

Intrachain disulfides connect C2/C14, C7/C19, and C13/C26.

As to expression, expressed by the venom gland.

Its subcellular location is the secreted. In terms of biological role, agglutinates erythrocytes. This is U2-theraphotoxin-Hhn1a from Cyriopagopus hainanus (Chinese bird spider).